The chain runs to 430 residues: MAVAPAGGQHAPALEALLGAGALRLLDSSQIVIISTAPDVGAPQLPAAPPTGPRDSDVLLFATPQAPRPAPSAPRPALGRPPVKRRLDLETDHQYLAGSSGPFRGRGRHPGKGVKSPGEKSRYETSLNLTTKRFLELLSRSADGVVDLNWAAEVLKVQKRRIYDITNVLEGIQLIAKKSKNHIQWLGSHTMVGIGKRLEGLTQDLQQLQESEQQLDHLMHICTTQLQLLSEDSDTQRLAYVTCQDLRSIADPAEQMVIVIKAPPETQLQAVDSSETFQISLKSKQGPIDVFLCPEESADGISPGKTSCQETSSGEDRTADSGPAGPPPSPPSTSPALDPSQSLLGLEQEAVLPRMGHLRVPMEEDQLSPLVAADSLLEHVKEDFSGLLPGEFISLSPPHEALDYHFGLEEGEGIRDLFDCDFGDLTPLDF.

A cyclin A:CDK2 binding region spans residues 62–103 (ATPQAPRPAPSAPRPALGRPPVKRRLDLETDHQYLAGSSGPF). An interaction with BIRC2/c-IAP1 region spans residues 84–186 (KRRLDLETDH…KKSKNHIQWL (103 aa)). The disordered stretch occupies residues 95–123 (YLAGSSGPFRGRGRHPGKGVKSPGEKSRY). Residues 105–189 (GRGRHPGKGV…KNHIQWLGSH (85 aa)) mediate DNA binding. N6-acetyllysine occurs at positions 112, 115, and 120. The interval 148–169 (LNWAAEVLKVQKRRIYDITNVL) is leucine-zipper. Residues 153–189 (EVLKVQKRRIYDITNVLEGIQLIAKKSKNHIQWLGSH) carry the DEF box motif. Lys-180 carries the post-translational modification N6-methyllysine; by SETD7. A required for interaction with TRIM28 region spans residues 187–375 (GSHTMVGIGK…QLSPLVAADS (189 aa)). Residues 190-279 (TMVGIGKRLE…AVDSSETFQI (90 aa)) form a dimerization region. The segment at 294–340 (PEESADGISPGKTSCQETSSGEDRTADSGPAGPPPSPPSTSPALDPS) is disordered. The span at 324–333 (AGPPPSPPST) shows a compositional bias: pro residues. The transactivation stretch occupies residues 361–430 (PMEEDQLSPL…DFGDLTPLDF (70 aa)). A phosphoserine mark is found at Ser-368 and Ser-396. The tract at residues 402–419 (LDYHFGLEEGEGIRDLFD) is RB1 binding. Phosphothreonine is present on Thr-426.

This sequence belongs to the E2F/DP family. In terms of assembly, component of the DRTF1/E2F transcription factor complex. Forms heterodimers with DP family members. The E2F1 complex binds specifically hypophosphorylated RB1, the interaction represses E2F1-driven transcription. During the cell cycle, RB1 becomes phosphorylated in mid-to-late G1 phase, detaches from the DRTF1/E2F complex, rendering E2F transcriptionally active. Interacts with TRRAP, which probably mediates its interaction with histone acetyltransferase complexes, leading to transcription activation. Binds TOPBP1 and EAPP. Interacts with ARID3A. Interacts with TRIM28; the interaction inhibits E2F1 acetylation through recruiting HDAC1 and represses its transcriptional activity. Interaction with KAT2B; the interaction acetylates E2F1 enhancing its DNA-binding and transcriptional activity. Interacts with BIRC2/c-IAP1 (via BIR domains). The complex TFDP1:E2F1 interacts with CEBPA; the interaction prevents CEBPA binding to target genes promoters and represses its transcriptional activity. Interacts with RRP1B. Interacts with HCFC1. Interacts with KMT2E; the interaction is probably indirect and is mediated via HCFC1. Interacts with DCAF5 and L3MBTL3; the interaction requires methylation at Lys-180 and is necessary to target E2F1 for ubiquitination by the CRL4-DCAF5 E3 ubiquitin ligase complex. Post-translationally, phosphorylated by CDK2 and cyclin A-CDK2 in the S-phase. Phosphorylation by CHEK2 stabilizes E2F1 upon DNA damage and regulates its effect on transcription and apoptosis. Phosphorylation at Ser-396 by GSK3B promotes interaction with USP11, leading to its deubiquitination and stabilization. Ubiquitinated via 'Lys-63'-linked ubiquitin, leading to its degradation. Deubiquitinated by USP11 following phosphorylation by GSK3B, promoting its stability. In terms of processing, acetylation stimulates DNA-binding. Enhanced under stress conditions such as DNA damage and inhibited by retinoblastoma protein RB1. Regulated by KAP1/TRIM28 which recruits HDAC1 to E2F1 resulting in deacetylation. Acetylated by P/CAF/KAT2B. Post-translationally, methylation at Lys-180 by SETD7 promotes E2F1 ubiquitin-dependent proteasomal degradation.

It localises to the nucleus. With respect to regulation, BIRC2/c-IAP1 stimulates its transcriptional activity. Transcription activator that binds DNA cooperatively with DP proteins through the E2 recognition site, 5'-TTTC[CG]CGC-3' found in the promoter region of a number of genes whose products are involved in cell cycle regulation or in DNA replication. The DRTF1/E2F complex functions in the control of cell-cycle progression from G1 to S phase. E2F1 binds preferentially RB1 in a cell-cycle dependent manner. It can mediate both cell proliferation and TP53/p53-dependent apoptosis. Blocks adipocyte differentiation by binding to specific promoters repressing CEBPA binding to its target gene promoters. Directly activates transcription of PEG10. Positively regulates transcription of RRP1B. The chain is Transcription factor E2F1 from Mus musculus (Mouse).